The primary structure comprises 218 residues: Ribonuclease T (218 aa).

The Exonuclease domain occupies 20-194; sequence VVIDVETAGF…YDAERTAELF (175 aa). Mg(2+) is bound by residues D23, E25, H181, and D186. The Proton donor/acceptor role is filled by H181.

It belongs to the RNase T family. As to quaternary structure, homodimer. The cofactor is Mg(2+).

Functionally, trims short 3' overhangs of a variety of RNA species, leaving a one or two nucleotide 3' overhang. Responsible for the end-turnover of tRNA: specifically removes the terminal AMP residue from uncharged tRNA (tRNA-C-C-A). Also appears to be involved in tRNA biosynthesis. The polypeptide is Ribonuclease T (Baumannia cicadellinicola subsp. Homalodisca coagulata).